We begin with the raw amino-acid sequence, 525 residues long: GMP synthase [glutamine-hydrolyzing] (525 aa).

A Glutamine amidotransferase type-1 domain is found at 8 to 207 (KILILDFGSQ…ALDICGCAAN (200 aa)). The active-site Nucleophile is the C85. Active-site residues include H181 and E183. The 193-residue stretch at 208–400 (WKPSSIIEDA…LGLPYNMLYR (193 aa)) folds into the GMPS ATP-PPase domain. 235–241 (SGGVDSS) contributes to the ATP binding site.

As to quaternary structure, homodimer.

It carries out the reaction XMP + L-glutamine + ATP + H2O = GMP + L-glutamate + AMP + diphosphate + 2 H(+). Its pathway is purine metabolism; GMP biosynthesis; GMP from XMP (L-Gln route): step 1/1. Its function is as follows. Catalyzes the synthesis of GMP from XMP. The polypeptide is GMP synthase [glutamine-hydrolyzing] (Shewanella baltica (strain OS223)).